The sequence spans 360 residues: Peptide chain release factor 1 (360 aa).

Gln-236 is modified (N5-methylglutamine).

This sequence belongs to the prokaryotic/mitochondrial release factor family. Methylated by PrmC. Methylation increases the termination efficiency of RF1.

The protein localises to the cytoplasm. Functionally, peptide chain release factor 1 directs the termination of translation in response to the peptide chain termination codons UAG and UAA. The polypeptide is Peptide chain release factor 1 (Methylococcus capsulatus (strain ATCC 33009 / NCIMB 11132 / Bath)).